The primary structure comprises 442 residues: Histidine--tRNA ligase (442 aa).

The protein belongs to the class-II aminoacyl-tRNA synthetase family. In terms of assembly, homodimer.

The protein localises to the cytoplasm. The enzyme catalyses tRNA(His) + L-histidine + ATP = L-histidyl-tRNA(His) + AMP + diphosphate + H(+). This Helicobacter pylori (strain J99 / ATCC 700824) (Campylobacter pylori J99) protein is Histidine--tRNA ligase (hisS).